Reading from the N-terminus, the 214-residue chain is ATP synthase subunit a (214 aa).

6 helical membrane passes run 9–29 (LDGM…VFMI), 64–84 (IMMV…TYGI), 88–108 (LWVN…SGYI), 121–141 (SGAP…SIMI), 150–170 (LVAN…VLSS), and 182–202 (LIMV…AYIF).

This sequence belongs to the ATPase A chain family. As to quaternary structure, F-type ATPases have 2 components, CF(1) - the catalytic core - and CF(0) - the membrane proton channel. CF(1) has five subunits: alpha(3), beta(3), gamma(1), delta(1), epsilon(1). CF(0) has three main subunits: a, b and c.

It is found in the mitochondrion inner membrane. In terms of biological role, mitochondrial membrane ATP synthase (F(1)F(0) ATP synthase or Complex V) produces ATP from ADP in the presence of a proton gradient across the membrane which is generated by electron transport complexes of the respiratory chain. F-type ATPases consist of two structural domains, F(1) - containing the extramembraneous catalytic core and F(0) - containing the membrane proton channel, linked together by a central stalk and a peripheral stalk. During catalysis, ATP synthesis in the catalytic domain of F(1) is coupled via a rotary mechanism of the central stalk subunits to proton translocation. Key component of the proton channel; it may play a direct role in the translocation of protons across the membrane. This chain is ATP synthase subunit a (ATP6), found in Albinaria caerulea (Land snail).